The chain runs to 272 residues: Indole-3-glycerol phosphate synthase (272 aa).

It belongs to the TrpC family.

The enzyme catalyses 1-(2-carboxyphenylamino)-1-deoxy-D-ribulose 5-phosphate + H(+) = (1S,2R)-1-C-(indol-3-yl)glycerol 3-phosphate + CO2 + H2O. It participates in amino-acid biosynthesis; L-tryptophan biosynthesis; L-tryptophan from chorismate: step 4/5. This Mycobacterium ulcerans (strain Agy99) protein is Indole-3-glycerol phosphate synthase.